The sequence spans 167 residues: Phospholipase A2 (167 aa).

The first 18 residues, 1–18, serve as a signal peptide directing secretion; sequence MQVVLGSLFLLLLSTSHG. The propeptide occupies 19–33; it reads WQIRDRIGDNELEER. Ca(2+) contacts are provided by tryptophan 41, glycine 43, and glycine 45. 5 cysteine pairs are disulfide-bonded: cysteine 42–cysteine 64, cysteine 63–cysteine 103, cysteine 70–cysteine 96, cysteine 94–cysteine 128, and cysteine 138–cysteine 146. An N-linked (GlcNAc...) asparagine glycan is attached at asparagine 46. Residue histidine 67 is part of the active site. Aspartate 68 provides a ligand contact to Ca(2+). Residue aspartate 97 is part of the active site.

It belongs to the phospholipase A2 family. Group III subfamily. Ca(2+) serves as cofactor. In terms of processing, N-glycosylated; contains mannose, N-acetylglucosamine and fucose alphal-6 and/or alphal-3 linked to the innermost N-acetylglucosamine. Expressed by the venom gland.

It is found in the secreted. It carries out the reaction a 1,2-diacyl-sn-glycero-3-phosphocholine + H2O = a 1-acyl-sn-glycero-3-phosphocholine + a fatty acid + H(+). Functionally, in vivo, intraplantar injection in mice cause spontaneous pain behaviors and paw swelling. PLA2 catalyzes the calcium-dependent hydrolysis of the 2-acyl groups in 3-sn-phosphoglycerides. The protein is Phospholipase A2 of Apis mellifera (Honeybee).